The primary structure comprises 466 residues: MYLTIWLVPLLAVGTWGQKFNRFCHYNSWALSRNPQHGLVPEDIDPFLCTHMILGFAEIDESGLRLKDPNHYQQQYLYQRIVRLRRINPRLNMILSVGGWDKSQEGYSKLVSSRENIIFFTKWIITYLRRHDFDGLDLDWEYPTFKGSPMVDKKKFVDLVENLAYEFDIEEIPDIKWKLTLTWTADPLESVRTSAYDIKGIASKVHYVNLKMYDFHGHWDDPLRVNHHSPLTSSNSPRNVNELAKTWVKAGVRIEKLILGIPFFGRSFTLKTANMSAPGSPAVGPGSDFGDGIPIHNLCHIIRGGTKELYLPEKKVPYIVSGSEWIGYDNPRSVMEKAQLVFNNALAGVMIYSLDMDDHHGTCGKKWPMMMAVIHGLNAYMEYIDSKHKSLELTYNKKILRARVSLRNYRRRNQQGKVAEMEQRIRNLEQELQQSMGNMAYERQQAQAMLNRGVSLPPIEQQSWSW.

A signal peptide spans 1–17 (MYLTIWLVPLLAVGTWG). One can recognise a GH18 domain in the interval 20-380 (FNRFCHYNSW…MAVIHGLNAY (361 aa)). C24 and C49 are joined by a disulfide. E141 serves as the catalytic Proton donor. Residues 395–447 (YNKKILRARVSLRNYRRRNQQGKVAEMEQRIRNLEQELQQSMGNMAYERQQAQ) are a coiled coil.

This sequence belongs to the glycosyl hydrolase 18 family. Prismatic layer of shell (at protein level). Expressed primarily in the mantle with highest level in the mantle edge and lower level in the mantle pallium.

Its subcellular location is the secreted. The enzyme catalyses Random endo-hydrolysis of N-acetyl-beta-D-glucosaminide (1-&gt;4)-beta-linkages in chitin and chitodextrins.. This is Putative chitinase 2 from Margaritifera margaritifera (Freshwater pearl mussel).